The following is a 1760-amino-acid chain: Chitin synthase A (1760 aa).

N157 is a glycosylation site (N-linked (GlcNAc...) asparagine). 2 consecutive transmembrane segments (helical) span residues 729–749 (IWTG…LRFV) and 765–785 (LVLV…IIAF). N-linked (GlcNAc...) asparagine glycans are attached at residues N876 and N996. A helical membrane pass occupies residues 1027-1047 (ILLAFTCLICAVILVKFLAAL). N1392 carries an N-linked (GlcNAc...) asparagine glycan. Helical transmembrane passes span 1417 to 1437 (FVVL…VYLG), 1449 to 1469 (IPII…IIFI), and 1477 to 1497 (IGWM…LPMY). N1557, N1645, and N1650 each carry an N-linked (GlcNAc...) asparagine glycan. Positions 1670–1691 (DNLLGVPRPNSRSPVGGYTSRP) are disordered. The region spanning 1702–1758 (GPDEMAITDAIRSCLAEVDLDTVTKKQVRALVEQRLQATLTGDKRAFLDRQIDQELA) is the DEK-C domain.

The protein belongs to the chitin synthase family. Class V subfamily.

Its subcellular location is the cell membrane. It catalyses the reaction [(1-&gt;4)-N-acetyl-beta-D-glucosaminyl](n) + UDP-N-acetyl-alpha-D-glucosamine = [(1-&gt;4)-N-acetyl-beta-D-glucosaminyl](n+1) + UDP + H(+). Polymerizes chitin, a structural polymer of the cell wall and septum, by transferring the sugar moiety of UDP-GlcNAc to the non-reducing end of the growing chitin polymer. Plays an important role in cell-wall formation during both hyphal growth and conidiation. This is Chitin synthase A from Aspergillus oryzae (strain ATCC 42149 / RIB 40) (Yellow koji mold).